The following is a 703-amino-acid chain: DnaJ homolog subfamily C member 14 (703 aa).

Disordered stretches follow at residues 1–150 and 164–229; these read MAQK…DGSS and EDEE…RKRS. The segment covering 17-28 has biased composition (low complexity); sequence SGGSSLITSGSS. Pro residues predominate over residues 75 to 84; that stretch reads HGPPRGPGPP. Composition is skewed to acidic residues over residues 89 to 102 and 164 to 176; these read YPDESETCSEESGV and EDEELEEEYDDEE. Over residues 193-202 the composition is skewed to basic residues; that stretch reads PPSRRQRHRF. The segment covering 203–218 has biased composition (basic and acidic residues); sequence LTKEDVRDSGRRDPKA. A compositionally biased stretch (basic residues) spans 219–228; that stretch reads PGRHRLARKR. 3 consecutive transmembrane segments (helical) span residues 254–274, 305–325, and 327–347; these read WWLIELLVLVGEYVETCGYLI, VMFQFLSQSFFSVAGLFIRLL, and VVGAFLLLALALFLGCLQLGW. The 65-residue stretch at 444 to 508 folds into the J domain; sequence NPFHVLGVEA…ERRKEYEMKR (65 aa). 2 disordered regions span residues 622 to 643 and 659 to 703; these read FGSRVPGTSGRQRATPESPPAD and MSNG…PFQR. Residues 673–684 are compositionally biased toward polar residues; it reads GTTSTSRPNSSV. The segment covering 691 to 703 has biased composition (basic residues); it reads PKRRKKVRRPFQR.

Interacts with the FxxxFxxxF motif of DRD1 via its C-terminal domain. In terms of tissue distribution, detected in heart, brain, lung, liver, skeletal muscle, kidney and testis.

It localises to the endoplasmic reticulum membrane. Functionally, regulates the export of target proteins, such as DRD1, from the endoplasmic reticulum to the cell surface. This Rattus norvegicus (Rat) protein is DnaJ homolog subfamily C member 14 (Dnajc14).